A 133-amino-acid polypeptide reads, in one-letter code: Protein msa (133 aa).

Transmembrane regions (helical) follow at residues 3 to 23, 27 to 47, 55 to 75, and 103 to 123; these read YLIL…AIGL, ILAA…ILFF, YIFF…VHLM, and FGFD…IVLY.

It localises to the cell membrane. Its function is as follows. Accessory element involved in the expression of sarA and several virulence factors. Modulates SarA production and/or function in a strain-dependent manner. Affects the transcription of the accessory gene regulator (agr) and genes encoding virulence factors including alpha toxin (hla) and protein A (spa). The chain is Protein msa (msa) from Staphylococcus aureus (strain USA300).